The following is a 2617-amino-acid chain: Ubiquitin carboxyl-terminal hydrolase 24 (2617 aa).

Positions 3 to 44 (SEEEQHMTTLLCMGFSDPATIRKALRLAKNDINEAVALLTNE) constitute a UBA domain. The segment at 45 to 99 (RPGLDYGGYEPMDSGGPSPGPGGGPRGDSGSDGSGPSRGGSTGGGGGFDPPPAYH) is disordered. Phosphoserine is present on residues S62 and S85. Over residues 65–92 (PGGGPRGDSGSDGSGPSRGGSTGGGGGF) the composition is skewed to gly residues. Y939 bears the Phosphotyrosine mark. Disordered stretches follow at residues 1030-1056 (KTSG…SGAF) and 1127-1148 (LLSE…QQHQ). Low complexity-rich tracts occupy residues 1031-1056 (TSGS…SGAF) and 1128-1148 (LSET…QQHQ). Residues S1138 and S1282 each carry the phosphoserine modification. The USP domain occupies 1686 to 2039 (VGLRNGGATC…NAYMLFYQRV (354 aa)). The active-site Nucleophile is the C1695. Residues 1920–1942 (QDSSSEVGENGRNMDQGGGGSPR) form a disordered region. S1940 bears the Phosphoserine mark. H1967 functions as the Proton acceptor in the catalytic mechanism. Phosphoserine occurs at positions 2044, 2074, and 2558. Residues 2060-2087 (AEDLSLSAPSSPEISPQSSPRPHRPNND) form a disordered region. Low complexity predominate over residues 2066 to 2079 (SAPSSPEISPQSSP). T2562 bears the Phosphothreonine mark. The tract at residues 2572-2617 (EKEQSGSSNGSESSPANENGERHLQQGSESPMMIGELRSDLDDVDP) is disordered. Residues 2576–2589 (SGSSNGSESSPANE) show a composition bias toward low complexity. S2601 is subject to Phosphoserine. A compositionally biased stretch (basic and acidic residues) spans 2608 to 2617 (LRSDLDDVDP).

This sequence belongs to the peptidase C19 family.

The enzyme catalyses Thiol-dependent hydrolysis of ester, thioester, amide, peptide and isopeptide bonds formed by the C-terminal Gly of ubiquitin (a 76-residue protein attached to proteins as an intracellular targeting signal).. Functionally, protease that can remove conjugated ubiquitin from target proteins and polyubiquitin chains. Deubiquitinates DDB2, preventing its proteasomal degradation. In Mus musculus (Mouse), this protein is Ubiquitin carboxyl-terminal hydrolase 24 (Usp24).